Reading from the N-terminus, the 787-residue chain is Phenylalanine--tRNA ligase beta subunit (787 aa).

In terms of domain architecture, tRNA-binding spans Gly38–Phe151. Residues Ser397 to Glu474 enclose the B5 domain. Mg(2+)-binding residues include Asp452, Asp458, Glu461, and Glu462. The FDX-ACB domain maps to His694–Arg785.

The protein belongs to the phenylalanyl-tRNA synthetase beta subunit family. Type 1 subfamily. In terms of assembly, tetramer of two alpha and two beta subunits. The cofactor is Mg(2+).

It is found in the cytoplasm. The catalysed reaction is tRNA(Phe) + L-phenylalanine + ATP = L-phenylalanyl-tRNA(Phe) + AMP + diphosphate + H(+). This Anaplasma marginale (strain St. Maries) protein is Phenylalanine--tRNA ligase beta subunit.